We begin with the raw amino-acid sequence, 208 residues long: Na(+)-translocating NADH-quinone reductase subunit D (208 aa).

5 consecutive transmembrane segments (helical) span residues 42–62 (IVMGISVALVTGFSSFFISLV), 72–92 (IIVQMAIIASLVTLVDQLLQA), 103–123 (VFVGLIITNCIVMGRAEAFAM), 131–151 (LIDGIGNGAGYGIMLLVVATV), and 178–198 (NGLFLLAPSAFFIIGFLIWGL).

The protein belongs to the NqrDE/RnfAE family. In terms of assembly, composed of six subunits; NqrA, NqrB, NqrC, NqrD, NqrE and NqrF.

It localises to the cell inner membrane. The catalysed reaction is a ubiquinone + n Na(+)(in) + NADH + H(+) = a ubiquinol + n Na(+)(out) + NAD(+). In terms of biological role, NQR complex catalyzes the reduction of ubiquinone-1 to ubiquinol by two successive reactions, coupled with the transport of Na(+) ions from the cytoplasm to the periplasm. NqrA to NqrE are probably involved in the second step, the conversion of ubisemiquinone to ubiquinol. This Neisseria meningitidis serogroup B (strain ATCC BAA-335 / MC58) protein is Na(+)-translocating NADH-quinone reductase subunit D.